We begin with the raw amino-acid sequence, 215 residues long: Histone H1.1 (215 aa).

A disordered region spans residues 1–43 (MSETVPPAPAASAAPEKPLAGKKAKKPAKAAAASKKKPAGPSV). Position 2 is an N-acetylserine (Ser2). Phosphoserine occurs at positions 2 and 12. Lys17 is modified (N6-acetyllysine). The segment covering 20 to 38 (AGKKAKKPAKAAAASKKKP) has biased composition (basic residues). The residue at position 37 (Lys37) is an N6-(beta-hydroxybutyryl)lysine. Positions 39-112 (AGPSVSELIV…GASGSFKLNK (74 aa)) constitute an H15 domain. Ser44 is modified (phosphoserine). Lys55 carries the post-translational modification N6-(beta-hydroxybutyryl)lysine. Arg57 bears the Citrulline mark. Lys67 is subject to N6-(beta-hydroxybutyryl)lysine. Position 78 is an N6-acetyllysine (Lys78). Lys88 carries the N6-(beta-hydroxybutyryl)lysine modification. Lys93 bears the N6-(beta-hydroxybutyryl)lysine; alternate mark. An N6-acetyllysine; alternate modification is found at Lys93. Positions 94-215 (GTLVQTKGTG…KPKKAAPKKK (122 aa)) are disordered. Residue Ser107 is modified to Phosphoserine. Lys109 carries the post-translational modification N6-(beta-hydroxybutyryl)lysine. Residues 122-147 (GASKVATKTKATGASKKLKKATGASK) show a composition bias toward low complexity. Lys125 is subject to N6-acetyllysine. 2 stretches are compositionally biased toward basic residues: residues 148 to 181 (KSVK…KKVA) and 188 to 215 (KAVK…PKKK). Thr204 is subject to Phosphothreonine.

It belongs to the histone H1/H5 family. As to quaternary structure, interacts with DFFB. Post-translationally, H1 histones are progressively phosphorylated during the cell cycle, becoming maximally phosphorylated during late G2 phase and M phase, and being dephosphorylated sharply thereafter. Citrullination at Arg-57 (H1R54ci) by PADI4 takes place within the DNA-binding site of H1 and results in its displacement from chromatin and global chromatin decondensation, thereby promoting pluripotency and stem cell maintenance.

It localises to the nucleus. Its subcellular location is the chromosome. In terms of biological role, histone H1 protein binds to linker DNA between nucleosomes forming the macromolecular structure known as the chromatin fiber. Histones H1 are necessary for the condensation of nucleosome chains into higher-order structured fibers. Also acts as a regulator of individual gene transcription through chromatin remodeling, nucleosome spacing and DNA methylation. The polypeptide is Histone H1.1 (Homo sapiens (Human)).